Here is a 173-residue protein sequence, read N- to C-terminus: Putative metal-dependent hydrolase BT9727_2476 (173 aa).

3 residues coordinate Zn(2+): H65, H156, and H160.

Belongs to the metal hydrolase YfiT family. As to quaternary structure, homodimer. Requires Zn(2+) as cofactor.

Its subcellular location is the cytoplasm. Functionally, possible metal-dependent hydrolase. This Bacillus thuringiensis subsp. konkukian (strain 97-27) protein is Putative metal-dependent hydrolase BT9727_2476.